Consider the following 207-residue polypeptide: Octanoyltransferase (207 aa).

The region spanning alanine 27 to alanine 203 is the BPL/LPL catalytic domain. Substrate is bound by residues arginine 66–histidine 73, serine 133–glycine 135, and glycine 146–alanine 148. The active-site Acyl-thioester intermediate is cysteine 164.

Belongs to the LipB family.

It is found in the cytoplasm. It carries out the reaction octanoyl-[ACP] + L-lysyl-[protein] = N(6)-octanoyl-L-lysyl-[protein] + holo-[ACP] + H(+). Its pathway is protein modification; protein lipoylation via endogenous pathway; protein N(6)-(lipoyl)lysine from octanoyl-[acyl-carrier-protein]: step 1/2. Its function is as follows. Catalyzes the transfer of endogenously produced octanoic acid from octanoyl-acyl-carrier-protein onto the lipoyl domains of lipoate-dependent enzymes. Lipoyl-ACP can also act as a substrate although octanoyl-ACP is likely to be the physiological substrate. The sequence is that of Octanoyltransferase from Neisseria meningitidis serogroup A / serotype 4A (strain DSM 15465 / Z2491).